The following is a 352-amino-acid chain: Photosystem II D2 protein (352 aa).

A helical membrane pass occupies residues 40-60 (CAYLALGGWLTGTTFVTSWYT). His117 lines the chlorophyll a pocket. Residues 124–140 (GFMLRQFEIAQSVRLRP) form a helical membrane-spanning segment. Residues Gln129 and Asn142 each coordinate pheophytin a. The helical transmembrane segment at 152–165 (VFVSVFLIYPLGQS) threads the bilayer. His197 serves as a coordination point for chlorophyll a. A helical transmembrane segment spans residues 207 to 227 (AALLCAIHGATVENTLFEDGD). 2 residues coordinate a plastoquinone: His214 and Phe261. His214 serves as a coordination point for Fe cation. Residue His268 coordinates Fe cation. The helical transmembrane segment at 278 to 294 (GLWMSALGVVGLALNLR) threads the bilayer.

This sequence belongs to the reaction center PufL/M/PsbA/D family. PSII is composed of 1 copy each of membrane proteins PsbA, PsbB, PsbC, PsbD, PsbE, PsbF, PsbH, PsbI, PsbJ, PsbK, PsbL, PsbM, PsbT, PsbY, PsbZ, Psb30/Ycf12, at least 3 peripheral proteins of the oxygen-evolving complex and a large number of cofactors. It forms dimeric complexes. It depends on The D1/D2 heterodimer binds P680, chlorophylls that are the primary electron donor of PSII, and subsequent electron acceptors. It shares a non-heme iron and each subunit binds pheophytin, quinone, additional chlorophylls, carotenoids and lipids. There is also a Cl(-1) ion associated with D1 and D2, which is required for oxygen evolution. The PSII complex binds additional chlorophylls, carotenoids and specific lipids. as a cofactor.

Its subcellular location is the plastid. The protein localises to the chloroplast thylakoid membrane. The enzyme catalyses 2 a plastoquinone + 4 hnu + 2 H2O = 2 a plastoquinol + O2. In terms of biological role, photosystem II (PSII) is a light-driven water:plastoquinone oxidoreductase that uses light energy to abstract electrons from H(2)O, generating O(2) and a proton gradient subsequently used for ATP formation. It consists of a core antenna complex that captures photons, and an electron transfer chain that converts photonic excitation into a charge separation. The D1/D2 (PsbA/PsbD) reaction center heterodimer binds P680, the primary electron donor of PSII as well as several subsequent electron acceptors. D2 is needed for assembly of a stable PSII complex. In Bigelowiella natans (Pedinomonas minutissima), this protein is Photosystem II D2 protein.